Consider the following 405-residue polypeptide: Diaminopimelate decarboxylase (405 aa).

N6-(pyridoxal phosphate)lysine is present on K46. Residues G225 and 259–262 (EPGR) each bind pyridoxal 5'-phosphate. Substrate is bound by residues R262, R298, and Y302. C329 functions as the Proton donor in the catalytic mechanism. Residues E330 and Y358 each contribute to the substrate site. Y358 contributes to the pyridoxal 5'-phosphate binding site.

It belongs to the Orn/Lys/Arg decarboxylase class-II family. LysA subfamily. In terms of assembly, homodimer. The cofactor is pyridoxal 5'-phosphate.

It catalyses the reaction meso-2,6-diaminopimelate + H(+) = L-lysine + CO2. It participates in amino-acid biosynthesis; L-lysine biosynthesis via DAP pathway; L-lysine from DL-2,6-diaminopimelate: step 1/1. Its function is as follows. Specifically catalyzes the decarboxylation of meso-diaminopimelate (meso-DAP) to L-lysine. The polypeptide is Diaminopimelate decarboxylase (Helicobacter pylori (Campylobacter pylori)).